Reading from the N-terminus, the 48-residue chain is Osteocalcin (48 aa).

A Gla domain is found at 1-46 (SFAVGSSYGAAPDPLEAQREVCELNPDCDELADHIGFQEAYRRFYG). Residues glutamate 16, glutamate 20, glutamate 23, and aspartate 29 each coordinate Ca(2+). 4-carboxyglutamate occurs at positions 16, 20, and 23. Cysteine 22 and cysteine 28 are oxidised to a cystine.

This sequence belongs to the osteocalcin/matrix Gla protein family. Post-translationally, gamma-carboxyglutamate residues are formed by vitamin K dependent carboxylation by GGCX. These residues are essential for the binding of calcium.

It localises to the secreted. The carboxylated form is one of the main organic components of the bone matrix, which constitutes 1-2% of the total bone protein. The carboxylated form binds strongly to apatite and calcium. The protein is Osteocalcin (BGLAP) of Dromaius novaehollandiae (Emu).